A 555-amino-acid chain; its full sequence is Splicing factor U2af large subunit A (555 aa).

The tract at residues 1–165 (MRDYEGNGVD…ISGFDMAPPT (165 aa)) is disordered. 2 stretches are compositionally biased toward basic and acidic residues: residues 23-81 (ISRD…EKDR) and 90-127 (RDRS…DRED). The span at 143 to 155 (SKSRSRSPSKSKR) shows a compositional bias: basic residues. RRM domains lie at 221-304 (RRVY…RPSD), 341-419 (DRIF…RANQ), and 460-546 (EVVT…YPEN).

It belongs to the splicing factor SR family. In terms of tissue distribution, expressed in stems, leaves and apical buds.

It is found in the nucleus. Its function is as follows. Necessary for the splicing of pre-mRNA. Binds to the U -enriched regions of plant introns. This is Splicing factor U2af large subunit A (U2AF65A) from Nicotiana plumbaginifolia (Leadwort-leaved tobacco).